A 211-amino-acid polypeptide reads, in one-letter code: Probable GTP-binding protein EngB (211 aa).

The EngB-type G domain occupies Ser-26–Thr-200. GTP is bound by residues Gly-34–Ser-41, Gly-61–Leu-65, Asp-79–Gly-82, Thr-146–Asp-149, and Phe-179–Ser-181. Residues Ser-41 and Thr-63 each coordinate Mg(2+).

It belongs to the TRAFAC class TrmE-Era-EngA-EngB-Septin-like GTPase superfamily. EngB GTPase family. The cofactor is Mg(2+).

In terms of biological role, necessary for normal cell division and for the maintenance of normal septation. The sequence is that of Probable GTP-binding protein EngB from Pectobacterium carotovorum subsp. carotovorum (strain PC1).